A 171-amino-acid polypeptide reads, in one-letter code: MSGSVAAGAAAGPVPPAQEEGMTWWYRWLCRLAGVLGAVSCAISGLFNCVTIHPLNIAAGVWMIMNAFILLLCEAPFCCQFVEFANTVAEKVDRLRSWQKAVFYCGMAIVPIVMSLTLTTLLGNAIAFATGVLYGLSALGKKGDAISYARIQQQRQQADEEKLAETFEGEL.

Topologically, residues 1–31 (MSGSVAAGAAAGPVPPAQEEGMTWWYRWLCR) are cytoplasmic. The chain crosses the membrane as a helical span at residues 32 to 52 (LAGVLGAVSCAISGLFNCVTI). Over 53-56 (HPLN) the chain is Extracellular. The chain crosses the membrane as a helical span at residues 57–77 (IAAGVWMIMNAFILLLCEAPF). The Cytoplasmic portion of the chain corresponds to 78 to 101 (CCQFVEFANTVAEKVDRLRSWQKA). The helical transmembrane segment at 102–122 (VFYCGMAIVPIVMSLTLTTLL) threads the bilayer. Residues 123-124 (GN) are Extracellular-facing. The helical transmembrane segment at 125 to 141 (AIAFATGVLYGLSALGK) threads the bilayer. Topologically, residues 142 to 171 (KGDAISYARIQQQRQQADEEKLAETFEGEL) are cytoplasmic.

Belongs to the calcium channel flower family. As to quaternary structure, interacts with adaptor protein complex 2 (AP-2). Expressed in calyces in the brain (at protein level). Detected in cultured hippocampal neurons (at protein level).

It localises to the cell membrane. Its subcellular location is the cytoplasmic vesicle. The protein resides in the secretory vesicle. It is found in the synaptic vesicle. The protein localises to the golgi apparatus. It localises to the vesicle. Its function is as follows. Transmembrane protein which mediates synaptic endocytosis and fitness-based cell culling. In response to different stimulus strengths, controls two major modes of synaptic vesicle (SV) retrieval in hippocampal neurons; Clathrin-mediated endocytosis (CME) in response to mild stimulation and activity-dependent bulk endocytosis (ADBE) in response to strong stimulation. In cytotoxic T-lymphoocytes (CTLs) facilitates calcium-dependent endocytosis of cytotoxic granules (CGs) at the immuno synapse. Different isoforms work as fitness fingerprints in 'loser' and 'winner' cells and thereby mediate win/lose decisions as part of the cell competition process. In Rattus norvegicus (Rat), this protein is Calcium channel flower homolog (Cacfd1).